A 138-amino-acid polypeptide reads, in one-letter code: Large ribosomal subunit protein uL16 (138 aa).

The protein belongs to the universal ribosomal protein uL16 family. As to quaternary structure, part of the 50S ribosomal subunit.

Functionally, binds 23S rRNA and is also seen to make contacts with the A and possibly P site tRNAs. This is Large ribosomal subunit protein uL16 from Chlamydia muridarum (strain MoPn / Nigg).